Here is a 319-residue protein sequence, read N- to C-terminus: ATP-dependent 6-phosphofructokinase (319 aa).

Gly-11 serves as a coordination point for ATP. Arg-21–Arg-25 lines the ADP pocket. Residues Arg-72–Cys-73 and Gly-102–Ser-105 contribute to the ATP site. Asp-103 contacts Mg(2+). Thr-125 to Asp-127 lines the substrate pocket. Residue Asp-127 is the Proton acceptor of the active site. Arg-154 serves as a coordination point for ADP. Substrate-binding positions include Arg-162 and Met-169–Arg-171. Residues Gly-185–Glu-187, Arg-211, and Lys-213–His-215 each bind ADP. Substrate contacts are provided by residues Glu-222, Arg-243, and His-249–Arg-252.

This sequence belongs to the phosphofructokinase type A (PFKA) family. ATP-dependent PFK group I subfamily. Prokaryotic clade 'B1' sub-subfamily. In terms of assembly, homotetramer. Requires Mg(2+) as cofactor.

It localises to the cytoplasm. The catalysed reaction is beta-D-fructose 6-phosphate + ATP = beta-D-fructose 1,6-bisphosphate + ADP + H(+). The protein operates within carbohydrate degradation; glycolysis; D-glyceraldehyde 3-phosphate and glycerone phosphate from D-glucose: step 3/4. Its activity is regulated as follows. Allosterically activated by ADP and other diphosphonucleosides, and allosterically inhibited by phosphoenolpyruvate. Its function is as follows. Catalyzes the phosphorylation of D-fructose 6-phosphate to fructose 1,6-bisphosphate by ATP, the first committing step of glycolysis. The sequence is that of ATP-dependent 6-phosphofructokinase from Bacillus cytotoxicus (strain DSM 22905 / CIP 110041 / 391-98 / NVH 391-98).